The following is a 285-amino-acid chain: MSGRTYRVTGINLKGIPLGEADRIVTILTREQGLIRAVAKGSRKQPSKLGGRMEPFVINDLLMVRGRWSAQTETSQRLQRIVQAETLQTFPRLSRSLAHLTAAQYLAEVALLLALPDQAQEELFVVLVEHLERIERAASEQAVLPLLTHGLYHLLALAGFAPQVQACYFCQGGLVGSVFFSPQWGGLICDPCRVAQRPSPIAWVSASALRALGSLPSSTLPLPEDSLPLAAWLEAERLLRRVLEHHTDREIRSAELLASCYAVPTANGQGSPAFPEGHPEKWASA.

The protein belongs to the RecO family.

Functionally, involved in DNA repair and RecF pathway recombination. This is DNA repair protein RecO from Synechococcus sp. (strain JA-2-3B'a(2-13)) (Cyanobacteria bacterium Yellowstone B-Prime).